Consider the following 555-residue polypeptide: Formate--tetrahydrofolate ligase (555 aa).

65-72 (TPAGEGKS) lines the ATP pocket.

This sequence belongs to the formate--tetrahydrofolate ligase family.

It catalyses the reaction (6S)-5,6,7,8-tetrahydrofolate + formate + ATP = (6R)-10-formyltetrahydrofolate + ADP + phosphate. It participates in one-carbon metabolism; tetrahydrofolate interconversion. This chain is Formate--tetrahydrofolate ligase, found in Staphylococcus aureus (strain MRSA252).